A 457-amino-acid polypeptide reads, in one-letter code: Multidrug resistance protein MdtK (457 aa).

12 helical membrane passes run 11 to 31 (LLALAIPVILAQIAQTAMGFV), 53 to 73 (IWLPAILFGHGLLLALTPVIA), 93 to 113 (WLAGFVSVLIMLVLWNAGYII), 127 to 147 (AVGYLRALLWGAPGYLFFQVA), 160 to 180 (GMVMGFIGLLVNIPVNYIFIY), 189 to 209 (GGVGCGVATAAVYWVMFLAMV), 243 to 263 (LPIALALFFEVTLFAVVALLV), 276 to 296 (IALNFSSLMFVLPMSLAAAVT), 314 to 334 (AARTGLMVGVCMATLTAIFTV), 350 to 370 (VVTLAAHLMLLAAVYQISDSI), 387 to 407 (IFYITFTAYWVLGLPSGYILA), and 418 to 438 (PAGFWIGFIIGLTSAAIMMML).

The protein belongs to the multi antimicrobial extrusion (MATE) (TC 2.A.66.1) family. MdtK subfamily.

It localises to the cell inner membrane. Its function is as follows. Multidrug efflux pump that functions probably as a Na(+)/drug antiporter. This chain is Multidrug resistance protein MdtK, found in Escherichia coli O45:K1 (strain S88 / ExPEC).